The primary structure comprises 321 residues: Peroxidase 27 (321 aa).

A signal peptide spans Met-1–Ser-23. 4 cysteine pairs are disulfide-bonded: Cys-35/Cys-113, Cys-68/Cys-73, Cys-119/Cys-317, and Cys-196/Cys-228. The Proton acceptor role is filled by His-66. The Ca(2+) site is built by Asp-67, Val-70, Gly-72, Asp-74, and Ser-76. Position 159 (Pro-159) interacts with substrate. A glycan (N-linked (GlcNAc...) asparagine) is linked at Asn-164. His-189 provides a ligand contact to heme b. Ca(2+) is bound at residue Thr-190. A glycan (N-linked (GlcNAc...) asparagine) is linked at Asn-205. Residues Asp-240, Ser-243, and Asp-248 each coordinate Ca(2+).

This sequence belongs to the peroxidase family. Classical plant (class III) peroxidase subfamily. The cofactor is heme b. Requires Ca(2+) as cofactor. In terms of tissue distribution, expressed in the whole plant, but preferentially in roots and flowers.

It is found in the secreted. The enzyme catalyses 2 a phenolic donor + H2O2 = 2 a phenolic radical donor + 2 H2O. Its function is as follows. Removal of H(2)O(2), oxidation of toxic reductants, biosynthesis and degradation of lignin, suberization, auxin catabolism, response to environmental stresses such as wounding, pathogen attack and oxidative stress. These functions might be dependent on each isozyme/isoform in each plant tissue. In Arabidopsis thaliana (Mouse-ear cress), this protein is Peroxidase 27 (PER27).